The following is a 153-amino-acid chain: Calmodulin-like protein 4 (153 aa).

4 EF-hand domains span residues 8-43 (DAIQKFKECFSLYDKKGKGKIPAGDLLTVMRCLGTC), 44-79 (PTPGEVTRHLQVHKIGKDGEVDFSTFLTIMYRQQKQ), 81-116 (DPENEIMVAMLMSDKQKKGVIPLKELRAKLTQMGEK), and 117-152 (LTPEEVDDLLKGVKVGPDGMVKYEEFVRQITLPVPD).

This sequence belongs to the calmodulin family. Associates with the IMAC/intermicrovillar adhesion complex.

The protein localises to the cell projection. It is found in the microvillus. In terms of biological role, as part of the intermicrovillar adhesion complex/IMAC plays a role in epithelial brush border differentiation, controlling microvilli organization and length. Acts as a light chain for MYO7B and is required for efficient targeting of the IMAC to the tips of border brush microvilli. The sequence is that of Calmodulin-like protein 4 (calml4) from Xenopus tropicalis (Western clawed frog).